A 531-amino-acid polypeptide reads, in one-letter code: Peptide chain release factor 3 (531 aa).

The region spanning 10 to 278 (ARRRTFAIIS…DFVEHAPGPL (269 aa)) is the tr-type G domain. Residues 19–26 (SHPDAGKT), 87–91 (DTPGH), and 141–144 (NKLD) contribute to the GTP site.

This sequence belongs to the TRAFAC class translation factor GTPase superfamily. Classic translation factor GTPase family. PrfC subfamily.

Its subcellular location is the cytoplasm. In terms of biological role, increases the formation of ribosomal termination complexes and stimulates activities of RF-1 and RF-2. It binds guanine nucleotides and has strong preference for UGA stop codons. It may interact directly with the ribosome. The stimulation of RF-1 and RF-2 is significantly reduced by GTP and GDP, but not by GMP. The sequence is that of Peptide chain release factor 3 from Thioalkalivibrio sulfidiphilus (strain HL-EbGR7).